The chain runs to 239 residues: Pyridoxine 5'-phosphate synthase (239 aa).

Residue N7 coordinates 3-amino-2-oxopropyl phosphate. 9–10 (DH) contacts 1-deoxy-D-xylulose 5-phosphate. Residue R18 coordinates 3-amino-2-oxopropyl phosphate. Catalysis depends on H43, which acts as the Proton acceptor. 1-deoxy-D-xylulose 5-phosphate-binding residues include R45 and H50. The Proton acceptor role is filled by E70. 1-deoxy-D-xylulose 5-phosphate is bound at residue T100. The Proton donor role is filled by H191. 3-amino-2-oxopropyl phosphate is bound by residues G192 and 213-214 (GH).

The protein belongs to the PNP synthase family. Homooctamer; tetramer of dimers.

Its subcellular location is the cytoplasm. It catalyses the reaction 3-amino-2-oxopropyl phosphate + 1-deoxy-D-xylulose 5-phosphate = pyridoxine 5'-phosphate + phosphate + 2 H2O + H(+). Its pathway is cofactor biosynthesis; pyridoxine 5'-phosphate biosynthesis; pyridoxine 5'-phosphate from D-erythrose 4-phosphate: step 5/5. Its function is as follows. Catalyzes the complicated ring closure reaction between the two acyclic compounds 1-deoxy-D-xylulose-5-phosphate (DXP) and 3-amino-2-oxopropyl phosphate (1-amino-acetone-3-phosphate or AAP) to form pyridoxine 5'-phosphate (PNP) and inorganic phosphate. The protein is Pyridoxine 5'-phosphate synthase of Nostoc sp. (strain PCC 7120 / SAG 25.82 / UTEX 2576).